An 80-amino-acid chain; its full sequence is Small, acid-soluble spore protein Tlp (80 aa).

Belongs to the Tlp family.

Its subcellular location is the spore core. The polypeptide is Small, acid-soluble spore protein Tlp (Bacillus pumilus (strain SAFR-032)).